Consider the following 177-residue polypeptide: UPF0114 protein HP_0189 (177 aa).

3 helical membrane passes run 15–35 (WLLA…GYVF), 54–74 (LVLS…VLMV), and 145–165 (PIFW…LAAV).

Belongs to the UPF0114 family.

The protein resides in the cell membrane. In Helicobacter pylori (strain ATCC 700392 / 26695) (Campylobacter pylori), this protein is UPF0114 protein HP_0189.